We begin with the raw amino-acid sequence, 197 residues long: Beta-crystallin A2 (197 aa).

The N-terminal arm stretch occupies residues 1-11 (MSGTLSQGSSP). 2 Beta/gamma crystallin 'Greek key' domains span residues 12–52 (ARLT…KVES) and 53–99 (GAWV…RPLL). The segment at 100–105 (CANHSD) is connecting peptide. Beta/gamma crystallin 'Greek key' domains lie at 106 to 147 (SRVT…KVTS) and 148 to 196 (GAWV…RRVQ).

Belongs to the beta/gamma-crystallin family. Homo/heterodimer, or complexes of higher-order. The structure of beta-crystallin oligomers seems to be stabilized through interactions between the N-terminal arms.

Its function is as follows. Crystallins are the dominant structural components of the vertebrate eye lens. This Macropus fuliginosus (Western gray kangaroo) protein is Beta-crystallin A2 (CRYBA2).